We begin with the raw amino-acid sequence, 100 residues long: NADH-quinone oxidoreductase subunit K (100 aa).

The next 3 helical transmembrane spans lie at 3 to 23, 29 to 49, and 63 to 83; these read PTAY…IGVL, IMIF…LVAF, and FIVM…IVAI.

Belongs to the complex I subunit 4L family. NDH-1 is composed of 15 different subunits. Subunits NuoA, H, J, K, L, M, N constitute the membrane sector of the complex.

Its subcellular location is the cell membrane. It carries out the reaction a quinone + NADH + 5 H(+)(in) = a quinol + NAD(+) + 4 H(+)(out). Functionally, NDH-1 shuttles electrons from NADH, via FMN and iron-sulfur (Fe-S) centers, to quinones in the respiratory chain. The immediate electron acceptor for the enzyme in this species is believed to be a menaquinone. Couples the redox reaction to proton translocation (for every two electrons transferred, four hydrogen ions are translocated across the cytoplasmic membrane), and thus conserves the redox energy in a proton gradient. The chain is NADH-quinone oxidoreductase subunit K from Deinococcus geothermalis (strain DSM 11300 / CIP 105573 / AG-3a).